The sequence spans 213 residues: Octanoyltransferase (213 aa).

The BPL/LPL catalytic domain occupies 32–207 (DSTLDEIWLV…NILALLNNPD (176 aa)). Substrate contacts are provided by residues 71–78 (RGGQVTYH), 138–140 (SLG), and 151–153 (GLA). Cys-169 (acyl-thioester intermediate) is an active-site residue.

It belongs to the LipB family.

The protein localises to the cytoplasm. It catalyses the reaction octanoyl-[ACP] + L-lysyl-[protein] = N(6)-octanoyl-L-lysyl-[protein] + holo-[ACP] + H(+). The protein operates within protein modification; protein lipoylation via endogenous pathway; protein N(6)-(lipoyl)lysine from octanoyl-[acyl-carrier-protein]: step 1/2. Its function is as follows. Catalyzes the transfer of endogenously produced octanoic acid from octanoyl-acyl-carrier-protein onto the lipoyl domains of lipoate-dependent enzymes. Lipoyl-ACP can also act as a substrate although octanoyl-ACP is likely to be the physiological substrate. This Escherichia coli O8 (strain IAI1) protein is Octanoyltransferase.